A 444-amino-acid chain; its full sequence is Methylenetetrahydrofolate--tRNA-(uracil-5-)-methyltransferase TrmFO (444 aa).

An FAD-binding site is contributed by 9–14; the sequence is GAGMAG.

It belongs to the MnmG family. TrmFO subfamily. It depends on FAD as a cofactor.

It is found in the cytoplasm. The catalysed reaction is uridine(54) in tRNA + (6R)-5,10-methylene-5,6,7,8-tetrahydrofolate + NADH + H(+) = 5-methyluridine(54) in tRNA + (6S)-5,6,7,8-tetrahydrofolate + NAD(+). It catalyses the reaction uridine(54) in tRNA + (6R)-5,10-methylene-5,6,7,8-tetrahydrofolate + NADPH + H(+) = 5-methyluridine(54) in tRNA + (6S)-5,6,7,8-tetrahydrofolate + NADP(+). Its function is as follows. Catalyzes the folate-dependent formation of 5-methyl-uridine at position 54 (M-5-U54) in all tRNAs. This is Methylenetetrahydrofolate--tRNA-(uracil-5-)-methyltransferase TrmFO from Cereibacter sphaeroides (strain KD131 / KCTC 12085) (Rhodobacter sphaeroides).